A 305-amino-acid chain; its full sequence is Acetaldehyde dehydrogenase (305 aa).

Residue 13 to 16 (SGNI) coordinates NAD(+). C128 serves as the catalytic Acyl-thioester intermediate. NAD(+) contacts are provided by residues 159–167 (SAGPGTRQN) and N278.

Belongs to the acetaldehyde dehydrogenase family.

The catalysed reaction is acetaldehyde + NAD(+) + CoA = acetyl-CoA + NADH + H(+). The protein is Acetaldehyde dehydrogenase of Roseiflexus castenholzii (strain DSM 13941 / HLO8).